A 136-amino-acid polypeptide reads, in one-letter code: Large ribosomal subunit protein uL16 (136 aa).

The protein belongs to the universal ribosomal protein uL16 family. Part of the 50S ribosomal subunit.

In terms of biological role, binds 23S rRNA and is also seen to make contacts with the A and possibly P site tRNAs. This chain is Large ribosomal subunit protein uL16, found in Shewanella sediminis (strain HAW-EB3).